A 478-amino-acid polypeptide reads, in one-letter code: Ribosomal RNA small subunit methyltransferase F (478 aa).

S-adenosyl-L-methionine contacts are provided by residues 125-131, Glu-149, Asp-176, and Asp-194; that span reads AAAPGSK. Residue Cys-247 is the Nucleophile of the active site.

The protein belongs to the class I-like SAM-binding methyltransferase superfamily. RsmB/NOP family.

It is found in the cytoplasm. The catalysed reaction is cytidine(1407) in 16S rRNA + S-adenosyl-L-methionine = 5-methylcytidine(1407) in 16S rRNA + S-adenosyl-L-homocysteine + H(+). Its function is as follows. Specifically methylates the cytosine at position 1407 (m5C1407) of 16S rRNA. This is Ribosomal RNA small subunit methyltransferase F from Serratia proteamaculans (strain 568).